Consider the following 135-residue polypeptide: Hemoglobin subunit alpha (135 aa).

A Globin domain is found at 1-135; the sequence is AAVVALWGKI…VALALAERYK (135 aa). Residue His52 participates in O2 binding. His81 lines the heme b pocket.

Belongs to the globin family. Hb1 is a heterotetramer of two alpha chains and two beta-1 chains. Hb2 is a heterotetramer of two alpha chains and two beta-2 chains. Post-translationally, the N-terminus is blocked. In terms of tissue distribution, red blood cells.

Involved in oxygen transport from gills to the various peripheral tissues. The chain is Hemoglobin subunit alpha from Dissostichus eleginoides (Patagonian toothfish).